The primary structure comprises 131 residues: uncharacterized protein (131 aa).

A coiled-coil region spans residues 4–44 (QKPEQDVNKKIEELEKKVQELQEQLEKTKQAVKTVASILDN).

This is an uncharacterized protein from Sulfolobus islandicus filamentous virus (isolate Iceland/Hveragerdi) (SIFV).